Here is a 235-residue protein sequence, read N- to C-terminus: Keratin-associated protein 4-16 (235 aa).

Residues 1 to 132 (MCSSKMPCSP…CCCPCCCLRP (132 aa)) form a 16 X 5 AA repeats of C-C-[GIKRQVHEML]-[SPTRV]-[STVQRCP] region. 16 repeat units span residues 23–27 (CCHPS), 28–32 (CCQTT), 33–37 (CCRTT), 48–52 (CCRPQ), 53–57 (CCHSV), 58–62 (CCQPT), 63–67 (CCRPS), 68–72 (CCQTT), 78–82 (CCHPS), 83–87 (CCVSS), 88–92 (CCRPQ), 93–97 (CCHSV), 103–107 (CCHPS), 108–112 (CCISS), 118–122 (CCESS), and 128–132 (CCLRP). A compositionally biased stretch (pro residues) spans 203 to 224 (SPSPSLPSLSPPLPSPPLPSPH). The segment at 203–235 (SPSPSLPSLSPPLPSPPLPSPHFPSVNPKSMLQ) is disordered.

Belongs to the KRTAP type 4 family. As to quaternary structure, interacts with hair keratins.

In terms of biological role, in the hair cortex, hair keratin intermediate filaments are embedded in an interfilamentous matrix, consisting of hair keratin-associated proteins (KRTAP), which are essential for the formation of a rigid and resistant hair shaft through their extensive disulfide bond cross-linking with abundant cysteine residues of hair keratins. The matrix proteins include the high-sulfur and high-glycine-tyrosine keratins. In Homo sapiens (Human), this protein is Keratin-associated protein 4-16.